The following is a 103-amino-acid chain: Pterin-4-alpha-carbinolamine dehydratase 2 (103 aa).

The protein belongs to the pterin-4-alpha-carbinolamine dehydratase family. Highest level found in the kidney, liver, heart and ovarian follicles.

It carries out the reaction (4aS,6R)-4a-hydroxy-L-erythro-5,6,7,8-tetrahydrobiopterin = (6R)-L-erythro-6,7-dihydrobiopterin + H2O. Involved in tetrahydrobiopterin biosynthesis. Seems to both prevent the formation of 7-pterins and accelerate the formation of quinonoid-BH2. Its function is as follows. Regulates the dimerization of homeodomain protein HNF-1-alpha and enhances its transcriptional activity. This chain is Pterin-4-alpha-carbinolamine dehydratase 2 (PCBD2), found in Gallus gallus (Chicken).